Consider the following 113-residue polypeptide: Large ribosomal subunit protein bL19m (113 aa).

This sequence belongs to the bacterial ribosomal protein bL19 family.

The protein resides in the mitochondrion. The chain is Large ribosomal subunit protein bL19m (RPL19) from Reclinomonas americana.